The sequence spans 488 residues: Elongation factor Tu, chloroplastic (488 aa).

A disordered region spans residues 1-20 (MALSSTAATTSSKLKLSNPP). The N-terminal 79 residues, 1-79 (MALSSTAATT…RPSSSPFTVR (79 aa)), are a transit peptide targeting the chloroplast. Positions 89–293 (KPHLNIGTIG…EVDKYIPIPQ (205 aa)) constitute a tr-type G domain. Residues 98–105 (GHVDHGKT) are G1. 98-105 (GHVDHGKT) is a GTP binding site. The segment at 139 to 143 (GITIN) is G2. Positions 160–163 (DCPG) are G3. Residues 160–164 (DCPGH) and 215–218 (NKQD) contribute to the GTP site. Positions 215–218 (NKQD) are G4. Residues 253–255 (SAL) form a G5 region.

This sequence belongs to the TRAFAC class translation factor GTPase superfamily. Classic translation factor GTPase family. EF-Tu/EF-1A subfamily. In terms of tissue distribution, higher expression in leaves than in roots.

It is found in the plastid. Its subcellular location is the chloroplast. This protein promotes the GTP-dependent binding of aminoacyl-tRNA to the A-site of ribosomes during protein biosynthesis. This is Elongation factor Tu, chloroplastic (tufA) from Pisum sativum (Garden pea).